A 35-amino-acid chain; its full sequence is Coenzyme PQQ synthesis protein A (35 aa).

The segment at residues E16–Y20 is a cross-link (pyrroloquinoline quinone (Glu-Tyr)).

The protein belongs to the PqqA family.

Its pathway is cofactor biosynthesis; pyrroloquinoline quinone biosynthesis. Functionally, required for coenzyme pyrroloquinoline quinone (PQQ) biosynthesis. PQQ is probably formed by cross-linking a specific glutamate to a specific tyrosine residue and excising these residues from the peptide. This is Coenzyme PQQ synthesis protein A from Roseobacter denitrificans (strain ATCC 33942 / OCh 114) (Erythrobacter sp. (strain OCh 114)).